The sequence spans 664 residues: Lysophospholipase 1 (664 aa).

Positions 1-22 (MKLQSLLVSAAVLTSLTENVNA) are cleaved as a signal peptide. N-linked (GlcNAc...) asparagine glycans are attached at residues N26, N33, N52, N78, N92, N123, N160, N170, N215, N277, N307, N345, N388, N459, N489, N513, N541, N565, and N582. Residues 35-586 (TCDDDINLVR…TNYCWNGTID (552 aa)) enclose the PLA2c domain. A lipid anchor (GPI-anchor amidated asparagine) is attached at N634. A propeptide spans 635–664 (AGNALVNYSNLNTNTFIGVLSVISAVFGLI) (removed in mature form).

The protein belongs to the lysophospholipase family.

It localises to the cell membrane. It catalyses the reaction a 1-acyl-sn-glycero-3-phosphocholine + H2O = sn-glycerol 3-phosphocholine + a fatty acid + H(+). The enzyme catalyses a 1-acyl-sn-glycero-3-phospho-(1D-myo-inositol) + H2O = sn-glycero-3-phospho-1D-myo-inositol + a fatty acid + H(+). It carries out the reaction a 1-acyl-sn-glycero-3-phospho-L-serine + H2O = sn-glycero-3-phospho-L-serine + a fatty acid + H(+). The catalysed reaction is a 1,2-diacyl-sn-glycero-3-phospho-(1D-myo-inositol) + 2 H2O = sn-glycero-3-phospho-1D-myo-inositol + 2 a carboxylate + 2 H(+). It catalyses the reaction a 1,2-diacyl-sn-glycero-3-phospho-L-serine + 2 H2O = sn-glycero-3-phospho-L-serine + 2 a carboxylate + 2 H(+). The enzyme catalyses 2 1-hexadecanoyl-sn-glycero-3-phosphocholine = 1,2-dihexadecanoyl-sn-glycero-3-phosphocholine + sn-glycerol 3-phosphocholine. It carries out the reaction 1-hexadecanoyl-sn-glycero-3-phosphocholine + H2O = sn-glycerol 3-phosphocholine + hexadecanoate + H(+). The catalysed reaction is 1,2-dihexadecanoyl-sn-glycero-3-phosphocholine + H2O = 1-hexadecanoyl-sn-glycero-3-phosphocholine + hexadecanoate + H(+). In terms of biological role, sequentially removes both fatty acyl groups from diacylglycerophospholipids and therefore has both phospholipase B and lysophospholipase activities. It also displays transacylase activity. Substrate preference is phosphatidylserine &gt; phosphatidylinositol &gt;&gt; phosphatidylcholine &gt; phosphatidylethanolamine. The substrate specificity is pH- and ion-dependent. In contrast with activities observed at optimum pH 3.5, the order of substrate preference at pH 5.5 is phosphatidylcholine = phosphatidylethanolamine &gt;&gt; phosphatidylinositol. Degrades predominantly phosphatidylcholine and to some extent phosphatidylinositol in vivo. The polypeptide is Lysophospholipase 1 (Saccharomyces cerevisiae (strain ATCC 204508 / S288c) (Baker's yeast)).